A 123-amino-acid polypeptide reads, in one-letter code: Large ribosomal subunit protein uL14 (123 aa).

This sequence belongs to the universal ribosomal protein uL14 family. In terms of assembly, part of the 50S ribosomal subunit. Forms a cluster with proteins L3 and L19. In the 70S ribosome, L14 and L19 interact and together make contacts with the 16S rRNA in bridges B5 and B8.

In terms of biological role, binds to 23S rRNA. Forms part of two intersubunit bridges in the 70S ribosome. In Hamiltonella defensa subsp. Acyrthosiphon pisum (strain 5AT), this protein is Large ribosomal subunit protein uL14.